The sequence spans 170 residues: CASP-like protein 1F1 (170 aa).

Residues 1–16 (MMGDNEGRRTPLLNLG) are Cytoplasmic-facing. Residues 17 to 37 (VQVSMRVLIIGAAMASMWVMI) form a helical membrane-spanning segment. Over 38-62 (TNREVASVYGIAFEAKYSYSSAFRY) the chain is Extracellular. Residues 63–83 (LVYAQIAVCAATLFTLVWACL) form a helical membrane-spanning segment. Residues 84 to 88 (AVRRR) are Cytoplasmic-facing. The helical transmembrane segment at 89–109 (GLVFALFFFDLLTTLTAISAF) threads the bilayer. Residues 110 to 141 (SAAFAEGYVGKYGNKQAGWLPICGYVHVYCSR) lie on the Extracellular side of the membrane. The chain crosses the membrane as a helical span at residues 142–162 (VTISLAMSFASFVLLFILTVL). Residues 163 to 170 (TASSARHY) lie on the Cytoplasmic side of the membrane.

This sequence belongs to the Casparian strip membrane proteins (CASP) family. Homodimer and heterodimers.

It is found in the cell membrane. This Arabidopsis lyrata subsp. lyrata (Lyre-leaved rock-cress) protein is CASP-like protein 1F1.